Here is a 363-residue protein sequence, read N- to C-terminus: MSKQTPLYEKHLEAGARMVDFGGWSMPLHYGSQIEEHHAVRRDAGMFDVSHMTVVDVQGNGARDYLRFLLANDVAKLKVPGKALYSCMLTPEGGVVDDLITYYLSDTFYRLVVNAATRDKDLAWMRDRATGFDVLLQERDDLAMVAVQGPHGRDKALSVLDGEIARVADALSPFVGGQAGDWFVGRTGYTGEDGFEIMLPAAEAPAFWDRLKVAGVQPAGLGARDTLRLEAGMNLYGQDMDEQVSPLESGLAWTVAFEPAERDFVGRAALEKQKAAGGLRRFVGLVLEGRGVLRGHMRVLCGAAGEGEITSGGFSPTLGVSIALARVPAGTGERVEVDVRGKPQPARLVKPPFVRNGQACVEI.

This sequence belongs to the GcvT family. In terms of assembly, the glycine cleavage system is composed of four proteins: P, T, L and H.

The catalysed reaction is N(6)-[(R)-S(8)-aminomethyldihydrolipoyl]-L-lysyl-[protein] + (6S)-5,6,7,8-tetrahydrofolate = N(6)-[(R)-dihydrolipoyl]-L-lysyl-[protein] + (6R)-5,10-methylene-5,6,7,8-tetrahydrofolate + NH4(+). Functionally, the glycine cleavage system catalyzes the degradation of glycine. This is Aminomethyltransferase from Thioalkalivibrio sulfidiphilus (strain HL-EbGR7).